A 469-amino-acid chain; its full sequence is 3-isopropylmalate dehydratase large subunit (469 aa).

[4Fe-4S] cluster-binding residues include Cys347, Cys408, and Cys411.

It belongs to the aconitase/IPM isomerase family. LeuC type 1 subfamily. As to quaternary structure, heterodimer of LeuC and LeuD. It depends on [4Fe-4S] cluster as a cofactor.

It carries out the reaction (2R,3S)-3-isopropylmalate = (2S)-2-isopropylmalate. The protein operates within amino-acid biosynthesis; L-leucine biosynthesis; L-leucine from 3-methyl-2-oxobutanoate: step 2/4. In terms of biological role, catalyzes the isomerization between 2-isopropylmalate and 3-isopropylmalate, via the formation of 2-isopropylmaleate. This chain is 3-isopropylmalate dehydratase large subunit, found in Haemophilus influenzae (strain ATCC 51907 / DSM 11121 / KW20 / Rd).